The primary structure comprises 371 residues: Peptidyl-prolyl cis-trans isomerase CPR6 (371 aa).

The PPIase cyclophilin-type domain occupies 7–174 (FFDISIGGKP…RDVKIDDCGV (168 aa)). TPR repeat units follow at residues 219–252 (IETVKNIGTEQFKKQNYSVALEKYVKCDKFLKEY), 270–303 (VSIPLNIAICALKLKDYKQVLVASSEVLYAEAAD), and 308–341 (AKALYRRGLAYYHVNDTDMALNDLEMATTFQPND).

It belongs to the cyclophilin-type PPIase family. PPIase D subfamily. In terms of assembly, interacts with RPD3.

The protein localises to the cytoplasm. It catalyses the reaction [protein]-peptidylproline (omega=180) = [protein]-peptidylproline (omega=0). Functionally, PPIases accelerate the folding of proteins. It catalyzes the cis-trans isomerization of proline imidic peptide bonds in oligopeptides. In Saccharomyces cerevisiae (strain ATCC 204508 / S288c) (Baker's yeast), this protein is Peptidyl-prolyl cis-trans isomerase CPR6 (CPR6).